The sequence spans 209 residues: MSQVDINHARALVYQLLSSLFAREVDEQRLKELTSEAAQQFWEQLSLEAKLTQSVDKIRSTLNGIKDDETLLELAADYCGLFLVGTKHSASPYASLYLSGEDEPLLFGQQHQQMSEFLHQSKLQVQSHFPEPADHLAVMLAYMAHLCCHSEDSVQLSFLQTCVDSWLAKFINQLTQCDKNGFYSAVAILTLAWVKQDIAQLEPAEAVIS.

The protein belongs to the TorD/DmsD family. TorD subfamily.

Its subcellular location is the cytoplasm. Involved in the biogenesis of TorA. Acts on TorA before the insertion of the molybdenum cofactor and, as a result, probably favors a conformation of the apoenzyme that is competent for acquiring the cofactor. In Shewanella baltica (strain OS185), this protein is Chaperone protein TorD.